A 1243-amino-acid chain; its full sequence is Multifunctional 2-oxoglutarate metabolism enzyme (1243 aa).

The interval 1–40 (MNSPSPFGQNEWLVEEMYRKFREDPSSVDPSWHEFLVDYS) is 2-oxoglutarate dehydrogenase E1, N-terminal part. Residues 22–36 (REDPSSVDPSWHEFL) are compositionally biased toward basic and acidic residues. Residues 22–118 (REDPSSVDPS…AAPAGVSDDD (97 aa)) form a disordered region. Positions 41 to 103 (PEPTNDAPAG…KKPEEKTSPA (63 aa)) are linker. A compositionally biased stretch (low complexity) spans 47–58 (APAGNGKPAAAP). Pro residues predominate over residues 59–71 (TAPPEPASAPAPK). Residues 91 to 100 (APEKKPEEKT) are compositionally biased toward basic and acidic residues. Positions 101-112 (SPAPKAKTAAPA) are enriched in low complexity. Residues 104 to 353 (PKAKTAAPAG…LRTIHTLLLD (250 aa)) form a succinyltransferase E2 region. H332 acts as the Proton acceptor; for succinyltransferase activity in catalysis. The segment at 354-1243 (DEFYDEIFRE…QQEIIDEAFG (890 aa)) is 2-oxoglutarate dehydrogenase E1, C-terminal part. Position 558 (R558) interacts with thiamine diphosphate. The 2-oxoglutarate site is built by H597 and S622. Residues S622, L624, D661, A662, A663, and N694 each coordinate thiamine diphosphate. Residue D661 coordinates Mg(2+). N694 and I696 together coordinate Mg(2+). The stretch at 799 to 831 (DISMKEAEDALRDYQGQLERVFNEVRELEKHAI) forms a coiled coil. H1036 contributes to the 2-oxoglutarate binding site. Acetyl-CoA contacts are provided by T1054, R1070, K1105, S1108, Q1158, R1165, and R1166.

The protein belongs to the 2-oxoacid dehydrogenase family. Kgd subfamily. As to quaternary structure, homodimer. The 2-oxoglutarate dehydrogenase (ODH) complex contains multiple copies of three enzymatic components: 2-oxoglutarate dehydrogenase (E1), dihydrolipoamide succinyltransferase (E2) and lipoamide dehydrogenase (E3). Mg(2+) is required as a cofactor. It depends on thiamine diphosphate as a cofactor.

The catalysed reaction is glyoxylate + 2-oxoglutarate + H(+) = 2-hydroxy-3-oxoadipate + CO2. It carries out the reaction 2-oxoglutarate + H(+) = succinate semialdehyde + CO2. It catalyses the reaction N(6)-[(R)-lipoyl]-L-lysyl-[protein] + 2-oxoglutarate + H(+) = N(6)-[(R)-S(8)-succinyldihydrolipoyl]-L-lysyl-[protein] + CO2. The enzyme catalyses N(6)-[(R)-dihydrolipoyl]-L-lysyl-[protein] + succinyl-CoA = N(6)-[(R)-S(8)-succinyldihydrolipoyl]-L-lysyl-[protein] + CoA. Its pathway is carbohydrate metabolism; tricarboxylic acid cycle; succinate from 2-oxoglutarate (transferase route): step 1/2. It participates in carbohydrate metabolism; tricarboxylic acid cycle; succinyl-CoA from 2-oxoglutarate (dehydrogenase route): step 1/1. Its activity is regulated as follows. Alpha-ketoglutarate dehydrogenase and decarboxylase activities are inhibited by unphosphorylated GarA, and allosterically activated by acetyl-CoA, the main substrate of the TCA cycle. Its function is as follows. Shows three enzymatic activities that share a first common step, the attack of thiamine-PP on 2-oxoglutarate (alpha-ketoglutarate, KG), leading to the formation of an enamine-thiamine-PP intermediate upon decarboxylation. Thus, displays KGD activity, catalyzing the decarboxylation from five-carbon 2-oxoglutarate to four-carbon succinate semialdehyde (SSA). Also catalyzes C-C bond formation between the activated aldehyde formed after decarboxylation of alpha-ketoglutarate and the carbonyl of glyoxylate (GLX), to yield 2-hydroxy-3-oxoadipate (HOA), which spontaneously decarboxylates to form 5-hydroxylevulinate (HLA). And is also a component of the 2-oxoglutarate dehydrogenase (ODH) complex, that catalyzes the overall conversion of 2-oxoglutarate to succinyl-CoA and CO(2). The KG decarboxylase and KG dehydrogenase reactions provide two alternative, tightly regulated, pathways connecting the oxidative and reductive branches of the TCA cycle. This is Multifunctional 2-oxoglutarate metabolism enzyme (kgd) from Mycolicibacterium vanbaalenii (strain DSM 7251 / JCM 13017 / BCRC 16820 / KCTC 9966 / NRRL B-24157 / PYR-1) (Mycobacterium vanbaalenii).